The following is a 374-amino-acid chain: MQQKCYYEILNVSKTASGVEIKRAYRKLAMKYHPDRNPDDKEAEIKFKEISEAYEILSDDGKRSRYDQFGHAGVNQQGGAGSAGGFGGFEDIFDTFFGGGTSRGSNRSRASRGSDLEYTIEISLEEAFFGVEKEINIPRMESCDSCDGTGSKSKTKTTCHACHGQGTIRRQQGFFAFEQTCPVCNGTGSSIADPCDDCYGSGKIKKQKTIKVKIPEGVDNGDRIRLQGEGDSGSNGAMNGDLYIQILVKEHKIFERRDMNLYCEMPISFTKACLGGEIKVPTLDGEVVLKVVPETQTGKVFRLRERGMKSLRGQRRGDLLCKVVVETPINLNSEQKELLEKFADSLGEDYQSKHSPKSKTWFDNVKDYAKKFFE.

The 66-residue stretch at 5–70 folds into the J domain; that stretch reads CYYEILNVSK…GKRSRYDQFG (66 aa). The CR-type zinc finger occupies 130 to 207; sequence GVEKEINIPR…CYGSGKIKKQ (78 aa). Residues cysteine 143, cysteine 146, cysteine 159, cysteine 162, cysteine 181, cysteine 184, cysteine 195, and cysteine 198 each coordinate Zn(2+). CXXCXGXG motif repeat units lie at residues 143 to 150, 159 to 166, 181 to 188, and 195 to 202; these read CDSCDGTG, CHACHGQG, CPVCNGTG, and CDDCYGSG.

It belongs to the DnaJ family. In terms of assembly, homodimer. Requires Zn(2+) as cofactor.

Its subcellular location is the cytoplasm. In terms of biological role, participates actively in the response to hyperosmotic and heat shock by preventing the aggregation of stress-denatured proteins and by disaggregating proteins, also in an autonomous, DnaK-independent fashion. Unfolded proteins bind initially to DnaJ; upon interaction with the DnaJ-bound protein, DnaK hydrolyzes its bound ATP, resulting in the formation of a stable complex. GrpE releases ADP from DnaK; ATP binding to DnaK triggers the release of the substrate protein, thus completing the reaction cycle. Several rounds of ATP-dependent interactions between DnaJ, DnaK and GrpE are required for fully efficient folding. Also involved, together with DnaK and GrpE, in the DNA replication of plasmids through activation of initiation proteins. The protein is Chaperone protein DnaJ of Francisella philomiragia subsp. philomiragia (strain ATCC 25017 / CCUG 19701 / FSC 153 / O#319-036).